The chain runs to 350 residues: Ion-translocating oxidoreductase complex subunit D (350 aa).

Helical transmembrane passes span 20-39 (IMML…WYFF), 89-109 (IPPL…VIIA), and 123-143 (PAMI…TNWL). At threonine 187 the chain carries FMN phosphoryl threonine. The next 5 helical transmembrane spans lie at 215-235 (LAGL…LFLL), 244-264 (IPVS…LIAP), 267-287 (FLSP…FFIL), 301-321 (LVFG…GGYP), and 322-342 (DGVA…DYYT).

It belongs to the NqrB/RnfD family. The complex is composed of six subunits: RnfA, RnfB, RnfC, RnfD, RnfE and RnfG. FMN serves as cofactor.

It is found in the cell inner membrane. Part of a membrane-bound complex that couples electron transfer with translocation of ions across the membrane. In Cronobacter sakazakii (strain ATCC BAA-894) (Enterobacter sakazakii), this protein is Ion-translocating oxidoreductase complex subunit D.